Consider the following 160-residue polypeptide: Siroheme decarboxylase NirH subunit (160 aa).

The protein belongs to the Ahb/Nir family. As to quaternary structure, forms a complex composed of NirDL, NirG and NirH. All proteins are required for the total conversion of siroheme to didecarboxysiroheme.

It catalyses the reaction siroheme + 2 H(+) = 12,18-didecarboxysiroheme + 2 CO2. Its pathway is porphyrin-containing compound metabolism. In terms of biological role, involved in heme d1 biosynthesis. Catalyzes the decarboxylation of siroheme into didecarboxysiroheme. Siroheme is probably decarboxylated to monodecarboxysiroheme, which is in turn decarboxylated to didecarboxysiroheme. The protein is Siroheme decarboxylase NirH subunit of Paracoccus pantotrophus (Thiosphaera pantotropha).